Reading from the N-terminus, the 457-residue chain is UDP-glucosyltransferase 45 (457 aa).

Residue histidine 21 is the Proton acceptor of the active site. Residue histidine 21 participates in an anthocyanidin binding. The active-site Charge relay is the aspartate 112. UDP-alpha-D-glucose-binding residues include threonine 134, glutamine 336, histidine 351, tryptophan 354, asparagine 355, serine 356, glutamate 359, aspartate 375, and glutamine 376.

The protein belongs to the UDP-glycosyltransferase family.

The catalysed reaction is (20S)-protopanaxadiol + UDP-alpha-D-glucose = (20S)-ginsenoside Rh2 + UDP + H(+). It participates in secondary metabolite biosynthesis; terpenoid biosynthesis. Its function is as follows. Component of the triterpene saponins (e.g. PPD-type ginsenosides) biosynthetic pathway. Glycosyltransferase that catalyzes the biosynthesis of ginsenoside Rh2 from protopanaxadiol (PPD). This is UDP-glucosyltransferase 45 from Panax ginseng (Korean ginseng).